Consider the following 368-residue polypeptide: Cyclic GMP-AMP synthase-like receptor (368 aa).

ATP-binding positions include S60 and 72–74 (EYD). Residues E72, D74, and D190 each contribute to the Mg(2+) site. Residues D190 and 229-236 (RASFYRQE) each bind GTP. Residues 233–236 (YRQE), K254, and 268–272 (SYFIK) each bind ATP.

It belongs to the mab-21 family. Mg(2+) serves as cofactor. It depends on Mn(2+) as a cofactor.

It carries out the reaction GTP + ATP = 3',2'-cGAMP + 2 diphosphate. The enzyme catalyses GTP + ATP = pppA(2'-5')pG + diphosphate. The catalysed reaction is pppA(2'-5')pG = 3',2'-cGAMP + diphosphate. Its activity is regulated as follows. The enzyme activity is specifically activated by double-stranded RNA (dsRNA). Functionally, nucleotidyltransferase that catalyzes the formation of cyclic GMP-AMP (3',2'-cGAMP) from ATP and GTP and plays a key role in innate immunity. Synthesizes 3',2'-cGAMP in a two-step reaction through production of the linear intermediate pppA(2'-5')pG. Acts as a key sensor of double-stranded RNA (dsRNA), the presence of dsRNA in the cytoplasm being a danger signal that triggers the immune responses. Directly binds dsRNA, activating the nucleotidyltransferase activity, leading to synthesis of 3',2'-cGAMP, a second messenger that binds to and activates Sting, thereby triggering the antiviral immune response via activation of the NF-kappa-B transcription factor Rel (Relish). This is Cyclic GMP-AMP synthase-like receptor from Lucilia cuprina (Green bottle fly).